The following is a 384-amino-acid chain: Ferrochelatase, mitochondrial (384 aa).

C156 provides a ligand contact to [2Fe-2S] cluster. Active-site residues include H190 and N343. Residues C363, C366, and C371 each coordinate [2Fe-2S] cluster.

It belongs to the ferrochelatase family. Homodimer. Homotetramer. [2Fe-2S] cluster serves as cofactor.

The protein resides in the mitochondrion inner membrane. It catalyses the reaction heme b + 2 H(+) = protoporphyrin IX + Fe(2+). It functions in the pathway porphyrin-containing compound metabolism; protoheme biosynthesis; protoheme from protoporphyrin-IX: step 1/1. In terms of biological role, catalyzes the ferrous insertion into protoporphyrin IX. Terminal enzyme in heme biosynthesis. Contains four conserved cysteines that function as cluster ligands and play a crucial role in maintaining protein structure. This Drosophila melanogaster (Fruit fly) protein is Ferrochelatase, mitochondrial.